The following is a 62-amino-acid chain: Sperm protamine P1 (62 aa).

The tract at residues 1 to 62 (MARCRRHSRS…RYSRRGRRRY (62 aa)) is disordered.

This sequence belongs to the protamine P1 family. In terms of tissue distribution, testis.

It localises to the nucleus. Its subcellular location is the chromosome. Functionally, protamines substitute for histones in the chromatin of sperm during the haploid phase of spermatogenesis. They compact sperm DNA into a highly condensed, stable and inactive complex. This chain is Sperm protamine P1 (PRM1), found in Planigale maculata sinualis (Common planigale).